Consider the following 144-residue polypeptide: 3-dehydroquinate dehydratase (144 aa).

Catalysis depends on tyrosine 23, which acts as the Proton acceptor. Positions 74, 80, and 87 each coordinate substrate. Catalysis depends on histidine 100, which acts as the Proton donor. Residues 101–102 and arginine 111 contribute to the substrate site; that span reads LS.

Belongs to the type-II 3-dehydroquinase family. As to quaternary structure, homododecamer.

The catalysed reaction is 3-dehydroquinate = 3-dehydroshikimate + H2O. The protein operates within metabolic intermediate biosynthesis; chorismate biosynthesis; chorismate from D-erythrose 4-phosphate and phosphoenolpyruvate: step 3/7. Functionally, catalyzes a trans-dehydration via an enolate intermediate. The protein is 3-dehydroquinate dehydratase of Haemophilus ducreyi (strain 35000HP / ATCC 700724).